A 245-amino-acid chain; its full sequence is tRNA1(Val) (adenine(37)-N6)-methyltransferase (245 aa).

The protein belongs to the methyltransferase superfamily. tRNA (adenine-N(6)-)-methyltransferase family.

The protein localises to the cytoplasm. The catalysed reaction is adenosine(37) in tRNA1(Val) + S-adenosyl-L-methionine = N(6)-methyladenosine(37) in tRNA1(Val) + S-adenosyl-L-homocysteine + H(+). Its function is as follows. Specifically methylates the adenine in position 37 of tRNA(1)(Val) (anticodon cmo5UAC). The polypeptide is tRNA1(Val) (adenine(37)-N6)-methyltransferase (Escherichia coli O157:H7 (strain EC4115 / EHEC)).